The following is a 234-amino-acid chain: Carboxy-S-adenosyl-L-methionine synthase (234 aa).

S-adenosyl-L-methionine is bound by residues Y35, 60 to 62 (GCS), 109 to 110 (DI), N124, and R191.

Belongs to the class I-like SAM-binding methyltransferase superfamily. Cx-SAM synthase family. As to quaternary structure, homodimer.

The enzyme catalyses prephenate + S-adenosyl-L-methionine = carboxy-S-adenosyl-L-methionine + 3-phenylpyruvate + H2O. In terms of biological role, catalyzes the conversion of S-adenosyl-L-methionine (SAM) to carboxy-S-adenosyl-L-methionine (Cx-SAM). This is Carboxy-S-adenosyl-L-methionine synthase from Campylobacter fetus subsp. fetus (strain 82-40).